The sequence spans 109 residues: Putative polyketide cyclase (109 aa).

To polyketide cyclases.

Its function is as follows. Involved in developmentally regulated synthesis of a compound biosynthetically related to polyketide antibiotics which is essential for spore color in Streptomyces halstedii. The chain is Putative polyketide cyclase (sch4) from Streptomyces halstedii.